Reading from the N-terminus, the 262-residue chain is Urease accessory protein UreD (262 aa).

This sequence belongs to the UreD family. In terms of assembly, ureD, UreF and UreG form a complex that acts as a GTP-hydrolysis-dependent molecular chaperone, activating the urease apoprotein by helping to assemble the nickel containing metallocenter of UreC. The UreE protein probably delivers the nickel.

Its subcellular location is the cytoplasm. Functionally, required for maturation of urease via the functional incorporation of the urease nickel metallocenter. This chain is Urease accessory protein UreD, found in Acetivibrio thermocellus (strain ATCC 27405 / DSM 1237 / JCM 9322 / NBRC 103400 / NCIMB 10682 / NRRL B-4536 / VPI 7372) (Clostridium thermocellum).